A 357-amino-acid chain; its full sequence is cAMP-responsive element modulator (357 aa).

Residues 20–43 form a disordered region; that stretch reads ETVESQQDRSVTRSVAEHSSAHMQ. Basic and acidic residues predominate over residues 25-39; sequence QQDRSVTRSVAEHSS. Residues 101–160 form the KID domain; it reads TVQVATIAETDDSADSEVIDSHKRREILSRRPSYRKILNELSSDVPGIPKIEEEKSEEEG. Residues Ser116, Ser142, Ser284, Ser287, and Ser290 each carry the phosphoserine modification. Positions 299-357 constitute a bZIP domain; that stretch reads TRKRELRLMKNREAAKECRRRKKEYVKCLESRVAVLEVQNKKLIEELETLKDICSPKTD. The tract at residues 300-325 is basic motif; sequence RKRELRLMKNREAAKECRRRKKEYVK. Residues 327 to 348 are leucine-zipper; it reads LESRVAVLEVQNKKLIEELETL.

This sequence belongs to the bZIP family. Binds DNA as a dimer. Interacts with CDC34. Interacts with FHL5. May interact with TSSK4. Isoform 1 forms a heterodimer with CREB3L4. Stimulated by phosphorylation. Phosphorylated on Ser-116 by TSSK4 in vitro. Post-translationally, ubiquitinated by CDC34 and RAD6B in order to be degraded by the proteasome. Expressed in the testis.

Its subcellular location is the nucleus. It is found in the cytoplasm. Functionally, transcriptional regulator that binds the cAMP response element (CRE), a sequence present in many viral and cellular promoters. Isoforms are either transcriptional activators or repressors. Isoform 2, isoform 3 and isoform 4 are repressors, while isoform 1 is an activator. Plays a role in spermatogenesis and is involved in spermatid maturation. Binding of isoform 1 (activator) to CRE is increased by CREB3L4. The CREM isoform 1-CREB3L4 heterodimer functions through CRE and may recruit HIRA to CRE to regulate histone exchange. Its function is as follows. Plays a role in the regulation of the circadian clock: acts as a transcriptional repressor of the core circadian component PER1 by directly binding to cAMP response elements in its promoter. The protein is cAMP-responsive element modulator (Crem) of Mus musculus (Mouse).